Here is a 194-residue protein sequence, read N- to C-terminus: MIIIDTGCANLSSVKFAFDRLNIKAEISRDIATIKSADKLLLPGVGTAMAAMKILQDRNLIETIQNATQPMLGICLGMQLMTEYSSEGNVPTLSLMSGHTDLIPNTGLPLPHMGWNKVRYEQDHPLFAGIEQDSHFYFVHSYAVLPNEHTIATSDYGVPFSAALGCKNFYGVQFHPERSGKNGAQLLKNFVENL.

The Glutamine amidotransferase type-1 domain maps to 1–194; it reads MIIIDTGCAN…QLLKNFVENL (194 aa). Cys-75 (nucleophile) is an active-site residue. Catalysis depends on residues His-175 and Glu-177.

Heterodimer of HisH and HisF.

The protein resides in the cytoplasm. The catalysed reaction is 5-[(5-phospho-1-deoxy-D-ribulos-1-ylimino)methylamino]-1-(5-phospho-beta-D-ribosyl)imidazole-4-carboxamide + L-glutamine = D-erythro-1-(imidazol-4-yl)glycerol 3-phosphate + 5-amino-1-(5-phospho-beta-D-ribosyl)imidazole-4-carboxamide + L-glutamate + H(+). The enzyme catalyses L-glutamine + H2O = L-glutamate + NH4(+). It participates in amino-acid biosynthesis; L-histidine biosynthesis; L-histidine from 5-phospho-alpha-D-ribose 1-diphosphate: step 5/9. IGPS catalyzes the conversion of PRFAR and glutamine to IGP, AICAR and glutamate. The HisH subunit catalyzes the hydrolysis of glutamine to glutamate and ammonia as part of the synthesis of IGP and AICAR. The resulting ammonia molecule is channeled to the active site of HisF. This chain is Imidazole glycerol phosphate synthase subunit HisH, found in Mannheimia succiniciproducens (strain KCTC 0769BP / MBEL55E).